A 448-amino-acid polypeptide reads, in one-letter code: NADP-specific glutamate dehydrogenase (448 aa).

Substrate-binding residues include Lys-88, Gln-109, and Lys-112. Lys-124 functions as the Proton donor in the catalytic mechanism. Gly-163 lines the substrate pocket. Residues Thr-207 and Asn-238 each coordinate NADP(+). Ser-381 contributes to the substrate binding site.

It belongs to the Glu/Leu/Phe/Val dehydrogenases family. As to quaternary structure, homohexamer.

It catalyses the reaction L-glutamate + NADP(+) + H2O = 2-oxoglutarate + NH4(+) + NADPH + H(+). In terms of biological role, catalyzes the reversible oxidative deamination of glutamate to alpha-ketoglutarate and ammonia. This is NADP-specific glutamate dehydrogenase (gdhA) from Helicobacter pylori (strain ATCC 700392 / 26695) (Campylobacter pylori).